The chain runs to 413 residues: Multidrug resistance protein MdtM (413 aa).

Residues 1-14 (MQRIIQFFSQRATT) lie on the Cytoplasmic side of the membrane. The chain crosses the membrane as a helical span at residues 15–35 (LFFPMALILYDFAAYLTTDLI). Topologically, residues 36 to 51 (QPGIINVVRDFNADVS) are periplasmic. The chain crosses the membrane as a helical span at residues 52 to 72 (LAPASVSLYLAGGMALQWLLG). Residues 73–81 (PLSDRIGRR) are Cytoplasmic-facing. A helical membrane pass occupies residues 82–102 (PVLIAGALIFTLACAATLLTT). Residues 103–106 (SMTQ) are Periplasmic-facing. The helical transmembrane segment at 107-127 (FLVARFVQGTSICFIATVGYV) threads the bilayer. Residues 128–140 (TVQEAFGQTKAIK) are Cytoplasmic-facing. Residues 141-161 (LMAIITSIVLVAPVIGPLSGA) traverse the membrane as a helical segment. Over 162–170 (ALMHFVHWK) the chain is Periplasmic. A helical transmembrane segment spans residues 171–191 (VLFGIIAVMGLLALCGLLLAM). The Cytoplasmic segment spans residues 192–225 (PETVQRGAVPFSAVSVLRDFRNVFRNPIFLTGAA). The helical transmembrane segment at 226–246 (TLSLSYIPMMSWVAVSPVILI) threads the bilayer. The Periplasmic portion of the chain corresponds to 247 to 254 (DAGGMSTS). The chain crosses the membrane as a helical span at residues 255-275 (QFAWAQVPVFGAVIVANMIVV). Residues 276–289 (RLVKDPTRPRFIWR) are Cytoplasmic-facing. The next 2 helical transmembrane spans lie at 290–310 (AVPI…LLPH) and 311–331 (VWLW…MIFP). Topologically, residues 332-351 (TLFRFTLFSNNLPKGTVSAS) are cytoplasmic. Residues 352-372 (LNMVILTVMAVSVEVGRWLWF) traverse the membrane as a helical segment. The Periplasmic segment spans residues 373-376 (HGGR). Residues 377–397 (LPFHLLAAVAGVIVVFTLATL) traverse the membrane as a helical segment. Over 398–413 (LQRVRQHEAAELAAEK) the chain is Cytoplasmic.

The protein belongs to the major facilitator superfamily.

The protein resides in the cell inner membrane. Functionally, proton-dependent efflux pump. Confers resistance to a broad spectrum of chemically unrelated substrates. The chain is Multidrug resistance protein MdtM (mdtM) from Salmonella typhimurium (strain LT2 / SGSC1412 / ATCC 700720).